The sequence spans 193 residues: Pyridoxal 5'-phosphate synthase subunit PdxT (193 aa).

50-52 serves as a coordination point for L-glutamine; sequence GES. The active-site Nucleophile is cysteine 82. L-glutamine contacts are provided by residues arginine 109 and 136–137; that span reads IR. Catalysis depends on charge relay system residues histidine 172 and glutamate 174.

It belongs to the glutaminase PdxT/SNO family. As to quaternary structure, in the presence of PdxS, forms a dodecamer of heterodimers. Only shows activity in the heterodimer.

It catalyses the reaction aldehydo-D-ribose 5-phosphate + D-glyceraldehyde 3-phosphate + L-glutamine = pyridoxal 5'-phosphate + L-glutamate + phosphate + 3 H2O + H(+). It carries out the reaction L-glutamine + H2O = L-glutamate + NH4(+). Its pathway is cofactor biosynthesis; pyridoxal 5'-phosphate biosynthesis. Functionally, catalyzes the hydrolysis of glutamine to glutamate and ammonia as part of the biosynthesis of pyridoxal 5'-phosphate. The resulting ammonia molecule is channeled to the active site of PdxS. The protein is Pyridoxal 5'-phosphate synthase subunit PdxT of Streptococcus pneumoniae (strain JJA).